A 118-amino-acid chain; its full sequence is MNDLKSKSNIKLMKRVLTTYELRKYLKKYFCLTLDNYLVLAYLDVFKNDEGKYFMRDIISYIGIDQSRIVKSVKDLSKKGYLNKCRDPHDSRNVIIVVSVKQHNYIKNLLSEININET.

The H-T-H motif DNA-binding region spans 55-78 (MRDIISYIGIDQSRIVKSVKDLSK).

Belongs to the SarA family.

It is found in the cytoplasm. In terms of biological role, transcriptional regulator acting as an intermediary between major regulators sarA and agr and virulence genes. Represses alpha-hemolysin (hla) gene expression. Down-regulates agr RNAIII expression by repressing sarU, a positive activator of agr expression. Up-regulates sarS, which induces the expression of the cell wall-associated protein A (spa). The protein is HTH-type transcriptional regulator SarT (sarT) of Staphylococcus aureus (strain NCTC 8325 / PS 47).